Consider the following 194-residue polypeptide: Peptidyl-tRNA hydrolase (194 aa).

Y17 is a binding site for tRNA. The active-site Proton acceptor is H22. TRNA is bound by residues Y68, N70, and N116.

It belongs to the PTH family. Monomer.

The protein localises to the cytoplasm. The catalysed reaction is an N-acyl-L-alpha-aminoacyl-tRNA + H2O = an N-acyl-L-amino acid + a tRNA + H(+). Functionally, hydrolyzes ribosome-free peptidyl-tRNAs (with 1 or more amino acids incorporated), which drop off the ribosome during protein synthesis, or as a result of ribosome stalling. Catalyzes the release of premature peptidyl moieties from peptidyl-tRNA molecules trapped in stalled 50S ribosomal subunits, and thus maintains levels of free tRNAs and 50S ribosomes. This chain is Peptidyl-tRNA hydrolase, found in Pseudomonas putida (strain ATCC 700007 / DSM 6899 / JCM 31910 / BCRC 17059 / LMG 24140 / F1).